Reading from the N-terminus, the 411-residue chain is Arginine deiminase (411 aa).

Cys401 functions as the Amidino-cysteine intermediate in the catalytic mechanism.

It belongs to the arginine deiminase family.

The protein localises to the cytoplasm. The catalysed reaction is L-arginine + H2O = L-citrulline + NH4(+). The protein operates within amino-acid degradation; L-arginine degradation via ADI pathway; carbamoyl phosphate from L-arginine: step 1/2. This is Arginine deiminase from Streptococcus equi subsp. zooepidemicus (strain H70).